Reading from the N-terminus, the 267-residue chain is Membrane-associated protein Vipp1 (267 aa).

Positions 26-156 (EKVLEQAVID…KANAELQQTL (131 aa)) form a coiled coil. The interval 224–252 (GTSAATPQLEAAPVDSSVPANNASQDDAV) is disordered.

Belongs to the PspA/Vipp/IM30 family.

It is found in the cell inner membrane. In terms of biological role, required for thylakoid formation. The chain is Membrane-associated protein Vipp1 from Synechocystis sp. (strain ATCC 27184 / PCC 6803 / Kazusa).